An 874-amino-acid chain; its full sequence is Alanine--tRNA ligase (874 aa).

Zn(2+)-binding residues include histidine 562, histidine 566, cysteine 664, and histidine 668.

The protein belongs to the class-II aminoacyl-tRNA synthetase family. The cofactor is Zn(2+).

The protein resides in the cytoplasm. It catalyses the reaction tRNA(Ala) + L-alanine + ATP = L-alanyl-tRNA(Ala) + AMP + diphosphate. Catalyzes the attachment of alanine to tRNA(Ala) in a two-step reaction: alanine is first activated by ATP to form Ala-AMP and then transferred to the acceptor end of tRNA(Ala). Also edits incorrectly charged Ser-tRNA(Ala) and Gly-tRNA(Ala) via its editing domain. The chain is Alanine--tRNA ligase from Shewanella sediminis (strain HAW-EB3).